The chain runs to 151 residues: Transcriptional repressor NrdR (151 aa).

A zinc finger lies at 3-34; sequence CPFCNSVDTSVKNSRPSDCKMSVRRRRSCDSC. The ATP-cone domain occupies 49–139; the sequence is VKVLKKDGSV…VYMNFSDVND (91 aa).

The protein belongs to the NrdR family. The cofactor is Zn(2+).

Negatively regulates transcription of bacterial ribonucleotide reductase nrd genes and operons by binding to NrdR-boxes. The polypeptide is Transcriptional repressor NrdR (Anaplasma marginale (strain Florida)).